Reading from the N-terminus, the 275-residue chain is Transcription factor JUNGBRUNNEN 1 (275 aa).

The interval 1–24 is disordered; the sequence is MSGEGNLGKDHEEENEAPLPGFRF. One can recognise an NAC domain in the interval 18 to 167; it reads PLPGFRFHPT…VWTLCRIFKR (150 aa). Residues 115–173 mediate DNA binding; sequence VGLKKSLVYYLGSAGKGTKTDWMMHEFRLPSTTKTDSPAQQAEVWTLCRIFKRVTSQRN. Residues 191-219 are disordered; that stretch reads CSKTSSLDSDHTSHRTVDSMSHEPPLPQP. The segment covering 198-211 has biased composition (basic and acidic residues); it reads DSDHTSHRTVDSMS.

Expressed in roots, root caps, cotyledons, tips and margin of young leaves, senescent regions of fully expanded leaves and floral tissues, including old sepals, petals, staments, mature anthers and pollen grains. Not detected in the abscission zone of open flowers, emerging lateral roots and root meristematic zones.

It localises to the nucleus. In terms of biological role, transcription factor that binds to the 5'- RRYGCCGT-3' consensus core sequence. Central longevity regulator. Negative regulator of leaf senescence. Modulates cellular H(2)O(2) levels and enhances tolerance to various abiotic stresses through the regulation of DREB2A. This is Transcription factor JUNGBRUNNEN 1 (JUB1) from Arabidopsis thaliana (Mouse-ear cress).